Here is a 248-residue protein sequence, read N- to C-terminus: PF03932 family protein CutC (248 aa).

Belongs to the CutC family. In terms of assembly, homodimer.

It is found in the cytoplasm. The polypeptide is PF03932 family protein CutC (Escherichia coli O157:H7).